A 750-amino-acid chain; its full sequence is Photosystem I P700 chlorophyll a apoprotein A1 (750 aa).

A run of 8 helical transmembrane segments spans residues 70 to 93 (VFSA…FHGA), 156 to 179 (LYCT…FHYH), 195 to 219 (LNHH…HVSL), 291 to 309 (IIHH…GHMY), 346 to 369 (WHAQ…HHMY), 385 to 411 (LSLF…IFMV), 433 to 455 (AIIS…LYIH), and 531 to 549 (FLVH…LILL). [4Fe-4S] cluster-binding residues include cysteine 573 and cysteine 582. The next 2 membrane-spanning stretches (helical) occupy residues 589 to 610 (HVFL…HFSW) and 664 to 686 (LSAY…MFLF). Histidine 675 is a chlorophyll a' binding site. Positions 683 and 691 each coordinate chlorophyll a. Residue tryptophan 692 coordinates phylloquinone. The helical transmembrane segment at 724–744 (AVGVTHYLLGGIATTWAFFLA) threads the bilayer.

This sequence belongs to the PsaA/PsaB family. In terms of assembly, the PsaA/B heterodimer binds the P700 chlorophyll special pair and subsequent electron acceptors. PSI consists of a core antenna complex that captures photons, and an electron transfer chain that converts photonic excitation into a charge separation. The eukaryotic PSI reaction center is composed of at least 11 subunits. P700 is a chlorophyll a/chlorophyll a' dimer, A0 is one or more chlorophyll a, A1 is one or both phylloquinones and FX is a shared 4Fe-4S iron-sulfur center. is required as a cofactor.

It is found in the plastid. It localises to the chloroplast thylakoid membrane. The catalysed reaction is reduced [plastocyanin] + hnu + oxidized [2Fe-2S]-[ferredoxin] = oxidized [plastocyanin] + reduced [2Fe-2S]-[ferredoxin]. Functionally, psaA and PsaB bind P700, the primary electron donor of photosystem I (PSI), as well as the electron acceptors A0, A1 and FX. PSI is a plastocyanin-ferredoxin oxidoreductase, converting photonic excitation into a charge separation, which transfers an electron from the donor P700 chlorophyll pair to the spectroscopically characterized acceptors A0, A1, FX, FA and FB in turn. Oxidized P700 is reduced on the lumenal side of the thylakoid membrane by plastocyanin. This Phaseolus vulgaris (Kidney bean) protein is Photosystem I P700 chlorophyll a apoprotein A1.